Here is a 501-residue protein sequence, read N- to C-terminus: Membrane-bound lytic murein transglycosylase F (501 aa).

A signal peptide spans 1 to 29 (MTKILLNTASTVLTRLWKLSLLGLVFAVA). The segment at 30–274 (AATLVSSRIP…DAMETFYGHL (245 aa)) is non-LT domain. The LT domain stretch occupies residues 275–501 (GEIDYSGAIL…VKSISGTSSL (227 aa)). Glutamate 321 is an active-site residue.

The protein in the N-terminal section; belongs to the bacterial solute-binding protein 3 family. It in the C-terminal section; belongs to the transglycosylase Slt family.

The protein resides in the cell outer membrane. It carries out the reaction Exolytic cleavage of the (1-&gt;4)-beta-glycosidic linkage between N-acetylmuramic acid (MurNAc) and N-acetylglucosamine (GlcNAc) residues in peptidoglycan, from either the reducing or the non-reducing ends of the peptidoglycan chains, with concomitant formation of a 1,6-anhydrobond in the MurNAc residue.. Its function is as follows. Murein-degrading enzyme that degrades murein glycan strands and insoluble, high-molecular weight murein sacculi, with the concomitant formation of a 1,6-anhydromuramoyl product. Lytic transglycosylases (LTs) play an integral role in the metabolism of the peptidoglycan (PG) sacculus. Their lytic action creates space within the PG sacculus to allow for its expansion as well as for the insertion of various structures such as secretion systems and flagella. This is Membrane-bound lytic murein transglycosylase F from Saccharophagus degradans (strain 2-40 / ATCC 43961 / DSM 17024).